The following is a 449-amino-acid chain: Sensor histidine protein kinase/phosphatase WalK (449 aa).

Over 1–13 the chain is Extracellular; the sequence is MLDLLKQTIFTRD. The chain crosses the membrane as a helical span at residues 14–34; that stretch reads FIFILILLGFILVVTLLLLEN. The 53-residue stretch at 35 to 87 folds into the HAMP domain; the sequence is RRDNIQLKQINQKVKDLIAGDYSKVLDMQGGSEITNITNNLNDLSEVIRLTQE. The Cytoplasmic segment spans residues 35–449; it reads RRDNIQLKQI…EEVWEDEVED (415 aa). In terms of domain architecture, PAS spans 92–158; that stretch reads ESKRLNSILF…YELRDLITQS (67 aa). The region spanning 157–211 is the PAC domain; sequence QSPELLLDSQDINGEYLNLRVRFALIRRESGFISGLVAVLHDTTEQEKEERERRL. Residues 215–435 enclose the Histidine kinase domain; the sequence is NVSHELRTPL…TFTIVLPYDK (221 aa). Histidine 218 is modified (phosphohistidine).

In terms of assembly, may form homodimers. May interact with serine/threonine-protein kinase StkP; the interaction may play a role in regulating Walk signal transduction. Autophosphorylated.

It localises to the membrane. The enzyme catalyses ATP + protein L-histidine = ADP + protein N-phospho-L-histidine.. Member of the two-component regulatory system WalK/WalR that regulates genes involved in cell wall metabolism. Functions as a sensor protein kinase which is autophosphorylated at a histidine residue and transfers its phosphate group to WalR. In turn, WalR binds to the upstream promoter regions of target genes to positively and negatively regulate their expression. Required to maintain expression of WalRK regulon genes in exponentially growing cells, including peptidoglycan hydrolase pcsB. Phosphorylates WalR and also capable of dephosphorylation of WalR. WalK phosphatase activity is probably involved in preventing cross-talk from PnpS and other non-cognate sensor kinases during exponential growth. May be considered a potential virulence factor. This Streptococcus pneumoniae serotype 2 (strain D39 / NCTC 7466) protein is Sensor histidine protein kinase/phosphatase WalK.